We begin with the raw amino-acid sequence, 307 residues long: Ribonuclease Z (307 aa).

Residues H63, H65, D67, H68, H141, D212, and H270 each coordinate Zn(2+). The active-site Proton acceptor is D67.

Belongs to the RNase Z family. In terms of assembly, homodimer. It depends on Zn(2+) as a cofactor.

It carries out the reaction Endonucleolytic cleavage of RNA, removing extra 3' nucleotides from tRNA precursor, generating 3' termini of tRNAs. A 3'-hydroxy group is left at the tRNA terminus and a 5'-phosphoryl group is left at the trailer molecule.. Functionally, zinc phosphodiesterase, which displays some tRNA 3'-processing endonuclease activity. Probably involved in tRNA maturation, by removing a 3'-trailer from precursor tRNA. The sequence is that of Ribonuclease Z from Bacillus cereus (strain ZK / E33L).